The following is a 679-amino-acid chain: Kelch-like protein diablo (679 aa).

The span at 1–48 shows a compositional bias: gly residues; sequence MGDLPGGGGGAAGGAGAAGGGGGGGNGAAGSSSSGGGASGSGGGGPGS. The tract at residues 1 to 84 is disordered; the sequence is MGDLPGGGGG…RLSHTSEKHP (84 aa). The region spanning 101 to 168 is the BTB domain; the sequence is CDVVLNVGGR…CYTAHIIVEE (68 aa). Positions 203–305 constitute a BACK domain; sequence CLGIRAFADT…SPKFLVGTVG (103 aa). Kelch repeat units lie at residues 352-398, 400-446, 447-493, 495-540, 542-587, and 588-634; these read VLFA…VLND, LYAV…VLDG, FLYA…VLGG, LYAI…VFNN, IYAV…VVNG, and QLYA…VMRA. Residues 643-679 are disordered; it reads CDNNSSNNNNNNYNLKHQQQQPQQQQQQQQQQTQQQL. Residues 645 to 679 are compositionally biased toward low complexity; that stretch reads NNSSNNNNNNYNLKHQQQQPQQQQQQQQQQTQQQL.

It functions in the pathway protein modification; protein ubiquitination. Probable substrate-specific adapter of an E3 ubiquitin-protein ligase complex which mediates the ubiquitination and subsequent proteasomal degradation of target proteins. May have a role in synapse differentiation and growth. This is Kelch-like protein diablo from Drosophila willistoni (Fruit fly).